A 678-amino-acid chain; its full sequence is Inositol-trisphosphate 3-kinase C (678 aa).

Disordered stretches follow at residues 26–128 (LEAL…RRNS) and 151–300 (DLQS…LDLS). Gly residues predominate over residues 44 to 58 (PGAGGPTGRPEGGGP). Composition is skewed to basic and acidic residues over residues 61–76 (WIEE…RTDL) and 107–116 (EKPRQNKELD). Ser-160 carries the phosphoserine modification. Composition is skewed to basic and acidic residues over residues 173–196 (ELDR…DNLR) and 220–236 (SGKE…HDTD). Residues 318 to 326 (LCPVPRLII) carry the Nuclear export signal motif. The disordered stretch occupies residues 328–380 (PETPEPEAQPVGPQSRIEGGTGGFSSASSFDESEDDLVAGGGGTSDPEDRAGS). A Phosphothreonine modification is found at Thr-330. Ser-398 carries the phosphoserine modification. ATP contacts are provided by residues Lys-426, 466 to 468 (EDL), and Asp-479. Substrate contacts are provided by residues Lys-481, 502–508 (RKDMYEK), and 529–536 (KPRYMQWR). A calmodulin-binding region spans residues 504-512 (DMYEKMVAV). Lys-553 and Asp-633 together coordinate ATP. Lys-636 is a binding site for substrate.

It belongs to the inositol phosphokinase (IPK) family.

The protein localises to the nucleus. Its subcellular location is the cytoplasm. It catalyses the reaction 1D-myo-inositol 1,4,5-trisphosphate + ATP = 1D-myo-inositol 1,3,4,5-tetrakisphosphate + ADP + H(+). Activated by calcium/calmodulin. Inhibited by high concentrations of the substrate Ins(1,2,4)P3, and allosterically activated by the product Ins(1,3,4,5)P4. Catalyzes the phosphorylation of 1D-myo-inositol 1,4,5-trisphosphate (InsP3) into 1D-myo-inositol 1,3,4,5-tetrakisphosphate and participates to the regulation of calcium homeostasis. Can phosphorylate inositol 2,4,5-triphosphate to inositol 2,4,5,6-tetraphosphate. The chain is Inositol-trisphosphate 3-kinase C (Itpkc) from Mus musculus (Mouse).